The following is a 133-amino-acid chain: L-cystatin (133 aa).

The first 19 residues, 1–19, serve as a signal peptide directing secretion; it reads MEGYNILAVLIILVGVSMG. Gln20 bears the Pyrrolidone carboxylic acid mark. The short motif at 67 to 71 is the Secondary area of contact element; it reads QVVSG. 2 cysteine pairs are disulfide-bonded: Cys85–Cys98 and Cys109–Cys129.

The protein belongs to the cystatin family. As to expression, expressed in hemocytes and slightly in heart.

The protein resides in the cytoplasmic granule. In terms of biological role, tight-binding inhibitor for papain. It has an important role in the protection of cells, antimicrobial activity against Gram-negative bacteria, defense against invading microbes, and response to external stimuli. The protein is L-cystatin of Tachypleus tridentatus (Japanese horseshoe crab).